Here is a 251-residue protein sequence, read N- to C-terminus: Large ribosomal subunit protein uL3 (251 aa).

Disordered stretches follow at residues 140–162 and 229–251; these read SHRS…NKKM and AAPA…EENA. The residue at position 151 (Gln151) is an N5-methylglutamine.

The protein belongs to the universal ribosomal protein uL3 family. Part of the 50S ribosomal subunit. Forms a cluster with proteins L14 and L19. In terms of processing, methylated by PrmB.

In terms of biological role, one of the primary rRNA binding proteins, it binds directly near the 3'-end of the 23S rRNA, where it nucleates assembly of the 50S subunit. This chain is Large ribosomal subunit protein uL3, found in Methylobacterium nodulans (strain LMG 21967 / CNCM I-2342 / ORS 2060).